Here is a 338-residue protein sequence, read N- to C-terminus: Glyceraldehyde-3-phosphate dehydrogenase, cytosolic (338 aa).

The binding to NAD stretch occupies residues 2–153 (ADKKIKIGIN…YKSDLNIVSN (152 aa)). Residues 15-16 (RI) and Asp-37 each bind NAD(+). Positions 56-75 (GQWKHNELKVKDEKTLLFGE) are external loop. Arg-84 is a binding site for NAD(+). Positions 154 to 338 (ASCTTNCLAP…VDLIIHMSKA (185 aa)) are catalytic. Residue 155-157 (SCT) coordinates D-glyceraldehyde 3-phosphate. The active-site Nucleophile is the Cys-156. Residues Cys-156 and Cys-160 each carry the S-nitrosocysteine modification. The interval 183-206 (HSITATQKTVDGPSMKDWRGGRAA) is S-loop. Residues Thr-186, 215–216 (TG), and Arg-238 contribute to the D-glyceraldehyde 3-phosphate site. Asn-320 provides a ligand contact to NAD(+).

This sequence belongs to the glyceraldehyde-3-phosphate dehydrogenase family. Homotetramer.

It is found in the cytoplasm. It catalyses the reaction D-glyceraldehyde 3-phosphate + phosphate + NAD(+) = (2R)-3-phospho-glyceroyl phosphate + NADH + H(+). The protein operates within carbohydrate degradation; glycolysis; pyruvate from D-glyceraldehyde 3-phosphate: step 1/5. Its function is as follows. Key enzyme in glycolysis that catalyzes the first step of the pathway by converting D-glyceraldehyde 3-phosphate (G3P) into 3-phospho-D-glyceroyl phosphate. Essential for the maintenance of cellular ATP levels and carbohydrate metabolism. In Sinapis alba (White mustard), this protein is Glyceraldehyde-3-phosphate dehydrogenase, cytosolic (GAPC).